Consider the following 621-residue polypeptide: DnaJ homolog subfamily C member 2 (621 aa).

M1 is subject to N-acetylmethionine. The epitope (recognized by CD8(+) cytotoxic T-lymphocytes) stretch occupies residues 23–31 (STLCQVEPV). 4 positions are modified to phosphoserine: S47, S49, S60, and S63. In terms of domain architecture, J spans 88-161 (DHYAVLGLGH…VKRRAFNSVD (74 aa)). Residues 160–250 (VDPTFDNSVP…RDERRWIEKQ (91 aa)) form a ZRF1-UBD region. Disordered regions lie at residues 294–315 (EKKA…QRQA) and 426–453 (KEEA…GSKN). SANT domains lie at 449–511 (NGSK…KLDP) and 549–604 (TDFT…EMVK).

In terms of assembly, component of ribosome-associated complex (RAC), a heterodimer composed of Hsp70/DnaK-type chaperone HSPA14 and Hsp40/DnaJ-type chaperone DNAJC2. Interacts (via ZRF1-UBD region) with ID1. Post-translationally, phosphorylated in M (mitotic) phase. In terms of tissue distribution, widely expressed.

It localises to the nucleus. Its subcellular location is the cytoplasm. The protein localises to the cytosol. Acts both as a chaperone in the cytosol and as a chromatin regulator in the nucleus. When cytosolic, acts as a molecular chaperone: component of the ribosome-associated complex (RAC), a complex involved in folding or maintaining nascent polypeptides in a folding-competent state. In the RAC complex, stimulates the ATPase activity of the ribosome-associated pool of Hsp70-type chaperones HSPA14 that bind to the nascent polypeptide chain. When nuclear, mediates the switching from polycomb-repressed genes to an active state: specifically recruited at histone H2A ubiquitinated at 'Lys-119' (H2AK119ub), and promotes the displacement of the polycomb PRC1 complex from chromatin, thereby facilitating transcription activation. The chain is DnaJ homolog subfamily C member 2 (DNAJC2) from Homo sapiens (Human).